Consider the following 90-residue polypeptide: Small ribosomal subunit protein bS18 (90 aa).

The protein belongs to the bacterial ribosomal protein bS18 family. In terms of assembly, part of the 30S ribosomal subunit. Forms a tight heterodimer with protein bS6.

Its function is as follows. Binds as a heterodimer with protein bS6 to the central domain of the 16S rRNA, where it helps stabilize the platform of the 30S subunit. In Polynucleobacter asymbioticus (strain DSM 18221 / CIP 109841 / QLW-P1DMWA-1) (Polynucleobacter necessarius subsp. asymbioticus), this protein is Small ribosomal subunit protein bS18.